The following is a 181-amino-acid chain: Dual-action ribosomal maturation protein DarP (181 aa).

Belongs to the DarP family.

The protein resides in the cytoplasm. Its function is as follows. Member of a network of 50S ribosomal subunit biogenesis factors which assembles along the 30S-50S interface, preventing incorrect 23S rRNA structures from forming. Promotes peptidyl transferase center (PTC) maturation. The protein is Dual-action ribosomal maturation protein DarP of Actinobacillus succinogenes (strain ATCC 55618 / DSM 22257 / CCUG 43843 / 130Z).